The primary structure comprises 315 residues: Olfactory receptor 8J2 (315 aa).

Topologically, residues 1-24 are extracellular; the sequence is MASGNLTWVTEFILVGVSDDPELQ. Asn5 carries N-linked (GlcNAc...) asparagine glycosylation. The helical transmembrane segment at 25–45 threads the bilayer; the sequence is IPLFLVFLVLYLLTVAGNLGI. Residues 46-57 lie on the Cytoplasmic side of the membrane; it reads ITLTSVDPQLQT. A helical membrane pass occupies residues 58 to 78; that stretch reads PMYFFLRHLAIINLCNSTVVA. Over 79–97 the chain is Extracellular; it reads PKMLVNFLVTKKTISYYGC. The cysteines at positions 97 and 179 are disulfide-linked. Residues 98–118 traverse the membrane as a helical segment; the sequence is AAQLGGFLVFIVAEIFTLAAM. At 119 to 143 the chain is on the cytoplasmic side; the sequence is AYDRYVAIWSPLLYAVVVSPKVCRL. The chain crosses the membrane as a helical span at residues 144 to 164; the sequence is LVSLTYLQSLITALTVSSCVF. The Extracellular portion of the chain corresponds to 165 to 205; sequence SVSYCSSNIINHFYCDDVPLLALSCSDTYIPETAVFIFSGT. Residues 206–226 traverse the membrane as a helical segment; the sequence is NLLFSMIVVLISYFNIVITIL. At 227–239 the chain is on the cytoplasmic side; the sequence is RIRSSEGRQKAFS. The chain crosses the membrane as a helical span at residues 240–260; it reads TCASHMIAVVVFYGTLLFMYL. Residues 261-271 are Extracellular-facing; it reads QPRSNHSLDTD. Asn265 is a glycosylation site (N-linked (GlcNAc...) asparagine). The helical transmembrane segment at 272–292 threads the bilayer; the sequence is KMASVFYTLVIPVLNPLIYSL. The Cytoplasmic portion of the chain corresponds to 293–315; it reads RNKNVKDALKRFLDNPCRSLKLM.

The protein belongs to the G-protein coupled receptor 1 family.

It is found in the membrane. Functionally, odorant receptor. This is Olfactory receptor 8J2 (OR8J2) from Homo sapiens (Human).